The following is a 277-amino-acid chain: Diaminopimelate epimerase (277 aa).

2 residues coordinate substrate: Asn-15 and Asn-74. The active-site Proton donor is the Cys-83. Residues 84 to 85 (GN), Asn-159, Asn-194, and 212 to 213 (ER) each bind substrate. Catalysis depends on Cys-221, which acts as the Proton acceptor. 222-223 (GT) is a binding site for substrate.

Belongs to the diaminopimelate epimerase family. As to quaternary structure, homodimer.

Its subcellular location is the cytoplasm. It catalyses the reaction (2S,6S)-2,6-diaminopimelate = meso-2,6-diaminopimelate. It participates in amino-acid biosynthesis; L-lysine biosynthesis via DAP pathway; DL-2,6-diaminopimelate from LL-2,6-diaminopimelate: step 1/1. Functionally, catalyzes the stereoinversion of LL-2,6-diaminopimelate (L,L-DAP) to meso-diaminopimelate (meso-DAP), a precursor of L-lysine and an essential component of the bacterial peptidoglycan. The sequence is that of Diaminopimelate epimerase from Corynebacterium glutamicum (strain R).